A 57-amino-acid polypeptide reads, in one-letter code: Small ribosomal subunit protein bS21 (57 aa).

The tract at residues 35–57 (REFYEKPSVRRKKKSEAARKRKY) is disordered. Basic residues predominate over residues 43–57 (VRRKKKSEAARKRKY).

Belongs to the bacterial ribosomal protein bS21 family.

This Bacillus licheniformis (strain ATCC 14580 / DSM 13 / JCM 2505 / CCUG 7422 / NBRC 12200 / NCIMB 9375 / NCTC 10341 / NRRL NRS-1264 / Gibson 46) protein is Small ribosomal subunit protein bS21.